The chain runs to 300 residues: Tyrosine recombinase XerC (300 aa).

The region spanning 2 to 88 (TQEGKLEQQF…SLRSFYTFLL (87 aa)) is the Core-binding (CB) domain. A Tyr recombinase domain is found at 109-294 (RLPKFFYSEE…TKEHLKSTYM (186 aa)). Active-site residues include R150, K174, H246, R249, and H272. The O-(3'-phospho-DNA)-tyrosine intermediate role is filled by Y281.

It belongs to the 'phage' integrase family. XerC subfamily. Forms a cyclic heterotetrameric complex composed of two molecules of XerC and two molecules of XerD.

The protein resides in the cytoplasm. Functionally, site-specific tyrosine recombinase, which acts by catalyzing the cutting and rejoining of the recombining DNA molecules. The XerC-XerD complex is essential to convert dimers of the bacterial chromosome into monomers to permit their segregation at cell division. It also contributes to the segregational stability of plasmids. The chain is Tyrosine recombinase XerC from Listeria monocytogenes serotype 4a (strain HCC23).